Consider the following 355-residue polypeptide: UDP-N-acetylglucosamine--N-acetylmuramyl-(pentapeptide) pyrophosphoryl-undecaprenol N-acetylglucosamine transferase (355 aa).

Residues 15-17, asparagine 127, arginine 163, serine 191, isoleucine 244, 263-268, and glutamine 288 each bind UDP-N-acetyl-alpha-D-glucosamine; these read TGG and ALTVSE.

This sequence belongs to the glycosyltransferase 28 family. MurG subfamily.

It localises to the cell inner membrane. It catalyses the reaction di-trans,octa-cis-undecaprenyl diphospho-N-acetyl-alpha-D-muramoyl-L-alanyl-D-glutamyl-meso-2,6-diaminopimeloyl-D-alanyl-D-alanine + UDP-N-acetyl-alpha-D-glucosamine = di-trans,octa-cis-undecaprenyl diphospho-[N-acetyl-alpha-D-glucosaminyl-(1-&gt;4)]-N-acetyl-alpha-D-muramoyl-L-alanyl-D-glutamyl-meso-2,6-diaminopimeloyl-D-alanyl-D-alanine + UDP + H(+). It functions in the pathway cell wall biogenesis; peptidoglycan biosynthesis. Cell wall formation. Catalyzes the transfer of a GlcNAc subunit on undecaprenyl-pyrophosphoryl-MurNAc-pentapeptide (lipid intermediate I) to form undecaprenyl-pyrophosphoryl-MurNAc-(pentapeptide)GlcNAc (lipid intermediate II). The protein is UDP-N-acetylglucosamine--N-acetylmuramyl-(pentapeptide) pyrophosphoryl-undecaprenol N-acetylglucosamine transferase of Salmonella gallinarum (strain 287/91 / NCTC 13346).